Consider the following 151-residue polypeptide: Ubiquitin-conjugating enzyme E2 N (151 aa).

The UBC core domain occupies 3-149 (SLPRRIIKET…AREWTQKYAV (147 aa)). Cys87 functions as the Glycyl thioester intermediate in the catalytic mechanism.

This sequence belongs to the ubiquitin-conjugating enzyme family.

The catalysed reaction is S-ubiquitinyl-[E1 ubiquitin-activating enzyme]-L-cysteine + [E2 ubiquitin-conjugating enzyme]-L-cysteine = [E1 ubiquitin-activating enzyme]-L-cysteine + S-ubiquitinyl-[E2 ubiquitin-conjugating enzyme]-L-cysteine.. It functions in the pathway protein modification; protein ubiquitination. Functionally, catalyzes the covalent attachment of ubiquitin to other proteins. The sequence is that of Ubiquitin-conjugating enzyme E2 N (ben) from Drosophila melanogaster (Fruit fly).